Reading from the N-terminus, the 91-residue chain is RNA-binding protein Hfq (91 aa).

Positions 9 to 68 (DPFLNALRRERVPVSIYLVNGIKLQGQVESFDQFVILLKNTVSQMVYKHAISTVVPSRPF) constitute a Sm domain. The segment at 66–91 (RPFNVGSHQGGSSNYNAQQDDSAGEQ) is disordered. Residues 71 to 91 (GSHQGGSSNYNAQQDDSAGEQ) show a composition bias toward polar residues.

The protein belongs to the Hfq family. Homohexamer.

In terms of biological role, RNA chaperone that binds small regulatory RNA (sRNAs) and mRNAs to facilitate mRNA translational regulation in response to envelope stress, environmental stress and changes in metabolite concentrations. Also binds with high specificity to tRNAs. The protein is RNA-binding protein Hfq of Shewanella amazonensis (strain ATCC BAA-1098 / SB2B).